The chain runs to 877 residues: TSET complex member tstB (877 aa).

2 disordered regions span residues 398–437 and 522–557; these read HLHHYHQGGSGTVGGSVPSSSSSSSSSSNITTSALSSGSS and TGLPNPISNNNNSSNNTKDQSTTTTTSTTSSSSNSI. Low complexity-rich tracts occupy residues 412–437 and 529–556; these read GSVPSSSSSSSSSSNITTSALSSGSS and SNNNNSSNNTKDQSTTTTTSTTSSSSNS.

In terms of assembly, component of the TSET complex, a heterohexamer composed of tstA, tstB, tstC, tstD, tstE and tstF, which may act in plasma membrane turnover. tstA, tstB, tstC and tstD are likely to be the core complex members with tstE and tstF acting as associated scaffold proteins.

In Dictyostelium discoideum (Social amoeba), this protein is TSET complex member tstB.